The primary structure comprises 96 residues: 5-hydroxytryptamine receptor 2B (96 aa).

Residues 1–8 (CNQSTLQM) lie on the Extracellular side of the membrane. An N-linked (GlcNAc...) asparagine glycan is attached at N2. The helical transmembrane segment at 9–30 (LLEIFVWIGYVSSGVNPLVYTL) threads the bilayer. Residues 24–28 (NPLVY) carry the NPxxY motif; important for ligand-induced conformation changes and signaling motif. Topologically, residues 31 to 96 (FNKTFRDAFG…STMYQSPVRL (66 aa)) are cytoplasmic. C45 carries the S-palmitoyl cysteine lipid modification.

It belongs to the G-protein coupled receptor 1 family. In terms of assembly, interacts (via C-terminus) with MPDZ.

The protein localises to the cell membrane. Its subcellular location is the synapse. The protein resides in the synaptosome. G-protein coupled receptor for 5-hydroxytryptamine (serotonin). Also functions as a receptor for various ergot alkaloid derivatives and psychoactive substances. Ligand binding causes a conformation change that triggers signaling via guanine nucleotide-binding proteins (G proteins) and modulates the activity of downstream effectors. HTR2B is coupled to G(q)/G(11) G alpha proteins and activates phospholipase C-beta, releasing diacylglycerol (DAG) and inositol 1,4,5-trisphosphate (IP3) second messengers that modulate the activity of phosphatidylinositol 3-kinase and promote the release of Ca(2+) ions from intracellular stores, respectively. Beta-arrestin family members inhibit signaling via G proteins and mediate activation of alternative signaling pathways. Plays a role in the regulation of dopamine and 5-hydroxytryptamine release, 5-hydroxytryptamine uptake and in the regulation of extracellular dopamine and 5-hydroxytryptamine levels, and thereby affects neural activity. May play a role in the perception of pain. Plays a role in the regulation of behavior, including impulsive behavior. Required for normal proliferation of embryonic cardiac myocytes and normal heart development. Protects cardiomyocytes against apoptosis. Plays a role in the adaptation of pulmonary arteries to chronic hypoxia. Plays a role in vasoconstriction. Required for normal osteoblast function and proliferation, and for maintaining normal bone density. Required for normal proliferation of the interstitial cells of Cajal in the intestine. This chain is 5-hydroxytryptamine receptor 2B (HTR2B), found in Cavia porcellus (Guinea pig).